Reading from the N-terminus, the 216-residue chain is Protein ADP-ribose pyrophosphatase ORF38 (216 aa).

Residues 1 to 177 enclose the Nudix hydrolase domain; that stretch reads MRNAAGLFMI…DYSNYIEFFD (177 aa). Residues 48–70 carry the Nudix box motif; sequence GHRDCCDAKVYETAVREFVEETG.

The protein resides in the host cytoplasm. Its subcellular location is the host nucleus. The enzyme catalyses ADP-D-ribose + H2O = D-ribose 5-phosphate + AMP + 2 H(+). Plays an important role in virus replication most probably through its hydrolyzing ADP-ribose activity in host cells. May function in viral DNA replication or transcription directly, or by removing toxic substances or metabolic intermediates. The sequence is that of Protein ADP-ribose pyrophosphatase ORF38 from Lepidoptera (butterflies and moths).